The sequence spans 208 residues: A-type ATP synthase subunit E (208 aa).

The protein belongs to the V-ATPase E subunit family. As to quaternary structure, has multiple subunits with at least A(3), B(3), C, D, E, F, H, I and proteolipid K(x).

It is found in the cell membrane. Its function is as follows. Component of the A-type ATP synthase that produces ATP from ADP in the presence of a proton gradient across the membrane. The chain is A-type ATP synthase subunit E from Ignicoccus hospitalis (strain KIN4/I / DSM 18386 / JCM 14125).